The chain runs to 390 residues: Magnesium-protoporphyrin IX monomethyl ester [oxidative] cyclase (390 aa).

Belongs to the AcsF family. Fe cation is required as a cofactor.

It carries out the reaction Mg-protoporphyrin IX 13-monomethyl ester + 3 NADPH + 3 O2 + 2 H(+) = 3,8-divinyl protochlorophyllide a + 3 NADP(+) + 5 H2O. Its pathway is porphyrin-containing compound metabolism; chlorophyll biosynthesis (light-independent). In terms of biological role, catalyzes the formation of the isocyclic ring in chlorophyll biosynthesis. Mediates the cyclase reaction, which results in the formation of divinylprotochlorophyllide (Pchlide) characteristic of all chlorophylls from magnesium-protoporphyrin IX 13-monomethyl ester (MgPMME). The protein is Magnesium-protoporphyrin IX monomethyl ester [oxidative] cyclase of Prochlorococcus marinus (strain MIT 9312).